The primary structure comprises 314 residues: Ribonucleoside-diphosphate reductase small subunit (314 aa).

Positions 73, 103, and 106 each coordinate Fe cation. Tyr-110 is a catalytic residue. A helical membrane pass occupies residues 160–180 (VLMILIEGIFFSSSFAAIAYL). Fe cation contacts are provided by Glu-166, Glu-200, and His-203.

It belongs to the ribonucleoside diphosphate reductase small chain family. Heterotetramer composed of a homodimer of the large subunit (R1) and a homodimer of the small subunit (R2). Larger multisubunit protein complex are also active, composed of (R1)n(R2)n. Fe cation is required as a cofactor.

The protein resides in the host membrane. The catalysed reaction is a 2'-deoxyribonucleoside 5'-diphosphate + [thioredoxin]-disulfide + H2O = a ribonucleoside 5'-diphosphate + [thioredoxin]-dithiol. Functionally, ribonucleoside-diphosphate reductase holoenzyme provides the precursors necessary for viral DNA synthesis. Allows virus growth in non-dividing cells, as well as reactivation from latency in infected hosts. Catalyzes the biosynthesis of deoxyribonucleotides from the corresponding ribonucleotides. The sequence is that of Ribonucleoside-diphosphate reductase small subunit from Bovine herpesvirus 1.1 (strain Cooper) (BoHV-1).